Reading from the N-terminus, the 165-residue chain is Putative 4-hydroxy-4-methyl-2-oxoglutarate aldolase (165 aa).

Substrate-binding positions include 80–83 (GGNL) and R102. D103 provides a ligand contact to a divalent metal cation.

The protein belongs to the class II aldolase/RraA-like family. Homotrimer. Requires a divalent metal cation as cofactor.

The enzyme catalyses 4-hydroxy-4-methyl-2-oxoglutarate = 2 pyruvate. It carries out the reaction oxaloacetate + H(+) = pyruvate + CO2. Its function is as follows. Catalyzes the aldol cleavage of 4-hydroxy-4-methyl-2-oxoglutarate (HMG) into 2 molecules of pyruvate. Also contains a secondary oxaloacetate (OAA) decarboxylase activity due to the common pyruvate enolate transition state formed following C-C bond cleavage in the retro-aldol and decarboxylation reactions. The sequence is that of Putative 4-hydroxy-4-methyl-2-oxoglutarate aldolase from Burkholderia mallei (strain NCTC 10247).